The chain runs to 736 residues: Phosphoribosylformylglycinamidine synthase subunit PurL (736 aa).

Residue His-49 is part of the active site. ATP is bound by residues Tyr-52 and Lys-91. Residue Glu-93 participates in Mg(2+) binding. Substrate contacts are provided by residues 94-97 and Arg-116; that span reads SHNH. His-95 (proton acceptor) is an active-site residue. Asp-117 is a Mg(2+) binding site. A substrate-binding site is contributed by Gln-240. Asp-268 lines the Mg(2+) pocket. 312 to 314 is a binding site for substrate; the sequence is ESQ. The ATP site is built by Asp-493 and Gly-530. Mg(2+) is bound at residue Asn-531. Residue Ser-533 participates in substrate binding.

The protein belongs to the FGAMS family. In terms of assembly, monomer. Part of the FGAM synthase complex composed of 1 PurL, 1 PurQ and 2 PurS subunits.

It localises to the cytoplasm. The catalysed reaction is N(2)-formyl-N(1)-(5-phospho-beta-D-ribosyl)glycinamide + L-glutamine + ATP + H2O = 2-formamido-N(1)-(5-O-phospho-beta-D-ribosyl)acetamidine + L-glutamate + ADP + phosphate + H(+). Its pathway is purine metabolism; IMP biosynthesis via de novo pathway; 5-amino-1-(5-phospho-D-ribosyl)imidazole from N(2)-formyl-N(1)-(5-phospho-D-ribosyl)glycinamide: step 1/2. Part of the phosphoribosylformylglycinamidine synthase complex involved in the purines biosynthetic pathway. Catalyzes the ATP-dependent conversion of formylglycinamide ribonucleotide (FGAR) and glutamine to yield formylglycinamidine ribonucleotide (FGAM) and glutamate. The FGAM synthase complex is composed of three subunits. PurQ produces an ammonia molecule by converting glutamine to glutamate. PurL transfers the ammonia molecule to FGAR to form FGAM in an ATP-dependent manner. PurS interacts with PurQ and PurL and is thought to assist in the transfer of the ammonia molecule from PurQ to PurL. This chain is Phosphoribosylformylglycinamidine synthase subunit PurL, found in Rhodopseudomonas palustris (strain ATCC BAA-98 / CGA009).